Reading from the N-terminus, the 230-residue chain is Thymidylate kinase (230 aa).

20–27 (GGEGAGKS) serves as a coordination point for ATP.

This sequence belongs to the thymidylate kinase family.

The enzyme catalyses dTMP + ATP = dTDP + ADP. Functionally, phosphorylation of dTMP to form dTDP in both de novo and salvage pathways of dTTP synthesis. The protein is Thymidylate kinase of Rhodopseudomonas palustris (strain BisB18).